The primary structure comprises 294 residues: Cytidine deaminase (294 aa).

CMP/dCMP-type deaminase domains lie at 48 to 168 and 187 to 294; these read NDDE…FGPK and DNTS…RVTL. Residue 89-91 participates in substrate binding; that stretch reads NME. Histidine 102 lines the Zn(2+) pocket. The active-site Proton donor is glutamate 104. Zn(2+) is bound by residues cysteine 129 and cysteine 132.

Belongs to the cytidine and deoxycytidylate deaminase family. Homodimer. Zn(2+) is required as a cofactor.

The catalysed reaction is cytidine + H2O + H(+) = uridine + NH4(+). It carries out the reaction 2'-deoxycytidine + H2O + H(+) = 2'-deoxyuridine + NH4(+). Its function is as follows. This enzyme scavenges exogenous and endogenous cytidine and 2'-deoxycytidine for UMP synthesis. This chain is Cytidine deaminase, found in Proteus mirabilis (strain HI4320).